Here is a 202-residue protein sequence, read N- to C-terminus: Remorin 1.4 (202 aa).

A compositionally biased stretch (basic and acidic residues) spans 1 to 10 (MAEEEPKKVT). Positions 1–79 (MAEEEPKKVT…VEEEKKEGSV (79 aa)) are disordered. The segment covering 25–39 (EKPAAAADVAPQEKP) has biased composition (low complexity). The segment covering 40 to 50 (VAPPPVLPSPA) has biased composition (pro residues). Residues 68-79 (KEVEEEKKEGSV) show a composition bias toward basic and acidic residues. A coiled-coil region spans residues 123–169 (ENNKKAAVEAELKKMEEQLEKKKAEYVEQMKNKIAQIHKEAEEKRAM).

It belongs to the remorin family.

This chain is Remorin 1.4, found in Arabidopsis thaliana (Mouse-ear cress).